Reading from the N-terminus, the 192-residue chain is INO80 complex subunit C (192 aa).

Residues 1-44 (MAAQIPIVATTSTPGIVRNSKKRPASPSHNGSSGGGYGASKKKK) are disordered.

In terms of assembly, component of the chromatin remodeling INO80 complex; specifically part of a complex module associated with the helicase ATP-binding and the helicase C-terminal domain of INO80. Component of some MLL1/MLL complex, at least composed of the core components KMT2A/MLL1, ASH2L, HCFC1/HCF1, WDR5 and RBBP5, as well as the facultative components BACC1, CHD8, E2F6, HSP70, INO80C, KANSL1, LAS1L, MAX, MCRS1, MGA, MYST1/MOF, PELP1, PHF20, PRP31, RING2, RUVB1/TIP49A, RUVB2/TIP49B, SENP3, TAF1, TAF4, TAF6, TAF7, TAF9 and TEX10.

Its subcellular location is the nucleus. Functionally, proposed core component of the chromatin remodeling INO80 complex which is involved in transcriptional regulation, DNA replication and probably DNA repair. This chain is INO80 complex subunit C (INO80C), found in Homo sapiens (Human).